A 907-amino-acid polypeptide reads, in one-letter code: Putative pentatricopeptide repeat-containing protein At5g59900 (907 aa).

PPR repeat units lie at residues 103 to 137, 155 to 185, 191 to 225, 226 to 260, 261 to 295, 296 to 330, 331 to 365, 366 to 400, 401 to 435, 436 to 470, 471 to 505, 506 to 540, 541 to 575, 576 to 610, 611 to 645, 646 to 680, 681 to 715, 716 to 750, 751 to 782, 786 to 820, 821 to 855, and 856 to 890; these read STAS…ALKP, SSSS…MITK, EVRT…GIRP, DVYI…GCDV, NIVP…DLKP, DVVT…RFSP, SEAA…GVSP, NLFV…GLRP, NDVT…GLKL, SVYP…KLEP, TVVT…GIAP, SIYT…NVKP, NRVT…GIVP, DTYS…NCEL, NEIC…GVDL, DLVC…GLKP, DDVI…GCVP, NEVT…SSVP, NQVT…ILKG, NTAT…GVSP, DCIT…GIRP, and DRVA…GLIP. The segment at 887-907 is disordered; that stretch reads GLIPNNKTSRTTTSNDTSSKS. Residues 891-907 show a composition bias toward low complexity; sequence NNKTSRTTTSNDTSSKS.

The protein belongs to the PPR family. P subfamily.

The protein is Putative pentatricopeptide repeat-containing protein At5g59900 of Arabidopsis thaliana (Mouse-ear cress).